A 334-amino-acid chain; its full sequence is Aspartate carbamoyltransferase catalytic subunit (334 aa).

Arg71 and Thr72 together coordinate carbamoyl phosphate. Lys99 provides a ligand contact to L-aspartate. The carbamoyl phosphate site is built by Arg121, His151, and Gln154. Positions 184 and 239 each coordinate L-aspartate. Carbamoyl phosphate contacts are provided by Gly280 and Pro281.

The protein belongs to the aspartate/ornithine carbamoyltransferase superfamily. ATCase family. As to quaternary structure, heterododecamer (2C3:3R2) of six catalytic PyrB chains organized as two trimers (C3), and six regulatory PyrI chains organized as three dimers (R2).

The enzyme catalyses carbamoyl phosphate + L-aspartate = N-carbamoyl-L-aspartate + phosphate + H(+). Its pathway is pyrimidine metabolism; UMP biosynthesis via de novo pathway; (S)-dihydroorotate from bicarbonate: step 2/3. Its function is as follows. Catalyzes the condensation of carbamoyl phosphate and aspartate to form carbamoyl aspartate and inorganic phosphate, the committed step in the de novo pyrimidine nucleotide biosynthesis pathway. This is Aspartate carbamoyltransferase catalytic subunit from Pseudomonas fluorescens (strain SBW25).